Consider the following 447-residue polypeptide: Probable glycine dehydrogenase (decarboxylating) subunit 1 (447 aa).

This sequence belongs to the GcvP family. N-terminal subunit subfamily. In terms of assembly, the glycine cleavage system is composed of four proteins: P, T, L and H. In this organism, the P 'protein' is a heterodimer of two subunits.

It carries out the reaction N(6)-[(R)-lipoyl]-L-lysyl-[glycine-cleavage complex H protein] + glycine + H(+) = N(6)-[(R)-S(8)-aminomethyldihydrolipoyl]-L-lysyl-[glycine-cleavage complex H protein] + CO2. In terms of biological role, the glycine cleavage system catalyzes the degradation of glycine. The P protein binds the alpha-amino group of glycine through its pyridoxal phosphate cofactor; CO(2) is released and the remaining methylamine moiety is then transferred to the lipoamide cofactor of the H protein. In Bacillus cytotoxicus (strain DSM 22905 / CIP 110041 / 391-98 / NVH 391-98), this protein is Probable glycine dehydrogenase (decarboxylating) subunit 1.